A 356-amino-acid polypeptide reads, in one-letter code: S-adenosylmethionine:tRNA ribosyltransferase-isomerase (356 aa).

This sequence belongs to the QueA family. As to quaternary structure, monomer.

Its subcellular location is the cytoplasm. The enzyme catalyses 7-aminomethyl-7-carbaguanosine(34) in tRNA + S-adenosyl-L-methionine = epoxyqueuosine(34) in tRNA + adenine + L-methionine + 2 H(+). It participates in tRNA modification; tRNA-queuosine biosynthesis. Transfers and isomerizes the ribose moiety from AdoMet to the 7-aminomethyl group of 7-deazaguanine (preQ1-tRNA) to give epoxyqueuosine (oQ-tRNA). In Nitrosospira multiformis (strain ATCC 25196 / NCIMB 11849 / C 71), this protein is S-adenosylmethionine:tRNA ribosyltransferase-isomerase.